A 97-amino-acid chain; its full sequence is Citrate lyase acyl carrier protein (97 aa).

Serine 14 bears the O-(phosphoribosyl dephospho-coenzyme A)serine mark.

Belongs to the CitD family. In terms of assembly, oligomer with a subunit composition of (alpha,beta,gamma)6.

Its subcellular location is the cytoplasm. Covalent carrier of the coenzyme of citrate lyase. This chain is Citrate lyase acyl carrier protein, found in Yersinia enterocolitica serotype O:8 / biotype 1B (strain NCTC 13174 / 8081).